Reading from the N-terminus, the 391-residue chain is Phosphoglycerate kinase (391 aa).

Substrate is bound by residues 19 to 21 (DYN), Arg35, 58 to 61 (HMGR), Arg117, and Arg150. ATP-binding positions include Lys201, Glu323, and 349–352 (GGDT).

It belongs to the phosphoglycerate kinase family. In terms of assembly, monomer.

The protein resides in the cytoplasm. The enzyme catalyses (2R)-3-phosphoglycerate + ATP = (2R)-3-phospho-glyceroyl phosphate + ADP. The protein operates within carbohydrate degradation; glycolysis; pyruvate from D-glyceraldehyde 3-phosphate: step 2/5. The sequence is that of Phosphoglycerate kinase from Desulforapulum autotrophicum (strain ATCC 43914 / DSM 3382 / VKM B-1955 / HRM2) (Desulfobacterium autotrophicum).